The sequence spans 476 residues: Ribosomal RNA small subunit methyltransferase F (476 aa).

Residues 125–131 (AAAPGSK), Glu149, Asp176, and Asp194 each bind S-adenosyl-L-methionine. Cys247 (nucleophile) is an active-site residue.

It belongs to the class I-like SAM-binding methyltransferase superfamily. RsmB/NOP family.

The protein resides in the cytoplasm. The enzyme catalyses cytidine(1407) in 16S rRNA + S-adenosyl-L-methionine = 5-methylcytidine(1407) in 16S rRNA + S-adenosyl-L-homocysteine + H(+). Functionally, specifically methylates the cytosine at position 1407 (m5C1407) of 16S rRNA. This is Ribosomal RNA small subunit methyltransferase F from Aeromonas salmonicida (strain A449).